The following is a 214-amino-acid chain: Large ribosomal subunit protein uL1 (214 aa).

It belongs to the universal ribosomal protein uL1 family. As to quaternary structure, part of the 50S ribosomal subunit.

Binds directly to 23S rRNA. Probably involved in E site tRNA release. Functionally, protein L1 is also a translational repressor protein, it controls the translation of its operon by binding to its mRNA. The sequence is that of Large ribosomal subunit protein uL1 from Methanoregula boonei (strain DSM 21154 / JCM 14090 / 6A8).